A 297-amino-acid polypeptide reads, in one-letter code: Coatomer subunit epsilon-2 (297 aa).

The protein belongs to the COPE family. In terms of assembly, oligomeric complex that consists of at least the alpha, beta, beta', gamma, delta, epsilon and zeta subunits.

It localises to the cytoplasm. Its subcellular location is the golgi apparatus membrane. The protein resides in the cytoplasmic vesicle. The protein localises to the COPI-coated vesicle membrane. In terms of biological role, the coatomer is a cytosolic protein complex that binds to dilysine motifs and reversibly associates with Golgi non-clathrin-coated vesicles, which further mediate biosynthetic protein transport from the ER, via the Golgi up to the trans Golgi network. The coatomer complex is required for budding from Golgi membranes, and is essential for the retrograde Golgi-to-ER transport of dilysine-tagged proteins. In Oryza sativa subsp. japonica (Rice), this protein is Coatomer subunit epsilon-2.